Here is a 334-residue protein sequence, read N- to C-terminus: Inositol 2-dehydrogenase (334 aa).

The protein belongs to the Gfo/Idh/MocA family. As to quaternary structure, homotetramer.

It catalyses the reaction myo-inositol + NAD(+) = scyllo-inosose + NADH + H(+). Involved in the oxidation of myo-inositol (MI) to 2-keto-myo-inositol (2KMI or 2-inosose). In Cereibacter sphaeroides (strain ATCC 17023 / DSM 158 / JCM 6121 / CCUG 31486 / LMG 2827 / NBRC 12203 / NCIMB 8253 / ATH 2.4.1.) (Rhodobacter sphaeroides), this protein is Inositol 2-dehydrogenase.